The chain runs to 369 residues: Mycofactocin maturase MftC (369 aa).

The Radical SAM core domain occupies 16-232; that stretch reads LDAPICLTWE…KGERVLTGDS (217 aa). The [4Fe-4S] cluster site is built by C30, C34, C37, C251, C258, C269, C310, C313, C319, C323, and C341. Residues 347–369 form a disordered region; it reads APALAQERHAPRPRVDHSRGSRE. Residues 352–369 show a composition bias toward basic and acidic residues; sequence QERHAPRPRVDHSRGSRE.

It belongs to the radical SAM superfamily. MftC family. Interacts with MftB. [4Fe-4S] cluster is required as a cofactor.

It catalyses the reaction [mycofactocin precursor peptide]-C-terminal glycyl-L-valyl-L-tyrosine + S-adenosyl-L-methionine = [mycofactocin precursor peptide]-C-terminal glycyl-N-{[2-(4-hydroxyphenyl)ethenyl]-3-methylbutanamide} + 5'-deoxyadenosine + L-methionine + CO2. It carries out the reaction [mycofactocin precursor peptide]-C-terminal glycyl-N-{[2-(4-hydroxyphenyl)ethenyl]-3-methylbutanamide} + AH2 + S-adenosyl-L-methionine = [mycofactocin precursor peptide]-C-terminal glycyl-N-{5-[(4-hydroxyphenyl)methyl]-4,4-dimethyl-2-oxopyrrolidin-3-yl}acetamide + 5'-deoxyadenosine + L-methionine + A + H(+). Its function is as follows. Radical S-adenosylmethionine (SAM) enzyme responsible for the first step of the biosynthesis of the enzyme cofactor mycofactocin (MFT). Catalyzes two reactions at the C-terminus of the mycofactocin precursor (the MftA peptide). The first one is the oxidative decarboxylation of the C-terminal L-tyrosine of MftA, forming an unsaturated tyramine moiety. The second reaction is the cross-linking of the tyramine with the penultimate L-valine residue, forming a five-membered lactam ring. Its activity requires the presence of the MftB chaperone. This chain is Mycofactocin maturase MftC, found in Mycobacterium ulcerans (strain Agy99).